The primary structure comprises 316 residues: Transmembrane protein 231 (316 aa).

A helical membrane pass occupies residues 23–43 (AALFLLLAAALTYIPPLLVAF). N-linked (GlcNAc...) asparagine glycosylation is found at N194, N199, and N221. The helical transmembrane segment at 262-282 (FWEMVKFAWVQYVSILLIFLW) threads the bilayer.

The protein belongs to the TMEM231 family. As to quaternary structure, part of the tectonic-like complex (also named B9 complex). Interacts with TMEM107.

The protein resides in the cell projection. Its subcellular location is the cilium membrane. Functionally, transmembrane component of the tectonic-like complex, a complex localized at the transition zone of primary cilia and acting as a barrier that prevents diffusion of transmembrane proteins between the cilia and plasma membranes. Required for ciliogenesis and sonic hedgehog/SHH signaling. This Homo sapiens (Human) protein is Transmembrane protein 231 (TMEM231).